Reading from the N-terminus, the 796-residue chain is Deadenylation-dependent mRNA-decapping factor PAT1 (796 aa).

Disordered regions lie at residues 1-21 (MSFF…DFEE), 164-200 (MGHP…PPPP), and 365-465 (KERP…NGNG). Serine 2 bears the N-acetylserine mark. Residues 165 to 192 (GHPQGLPQGPPQQQFPMQPASGQPGPSQ) show a composition bias toward low complexity. The segment covering 377 to 402 (AAGNSSQDNKQANTVLGKISSTLNSK) has biased composition (polar residues). 2 stretches are compositionally biased toward low complexity: residues 406–415 (RQLQIPRQQP) and 434–450 (ASSG…AVAS). Phosphoserine is present on residues serine 456 and serine 457.

This sequence belongs to the PAT1 family. Associates with the 40S ribosomal subunit. Associates with the heptameric LSM1-LSM7 complex. Interacts directly with LSM2 and LSM3 within the LSM1-LSM7 complex. Interacts with DHH1, LSM1, LSM5, RPB4, RPB7 and with topoisomerase TOP2. Interacts with CDC33, PAB1, TIF4631 and TIF4632 in an RNA-dependent manner. Binds mRNAs.

Its subcellular location is the cytoplasm. It localises to the nucleus. It is found in the P-body. The protein resides in the chromosome. The protein localises to the centromere. Its subcellular location is the kinetochore. It localises to the stress granule. Functionally, activator of decapping that functions as a general and active mechanism of translational repression and required for P-body formation. First decay factor recruited to mRNA, at a time when the mRNA is still associated with translation factors. Subsequently, PAT1 recruits the hepta-heterodimer LSM1-LSM7 complex to P-bodies. In association with the LSM1-LSM7 complex, stabilizes the 3' terminus of mRNAs. This association is also required for mosaic virus genomic RNA translation. Also together with the LSM1-LSM7 complex, the LSM1-LSM7 complex binds to osmotic stress-activated mRNAs to attenuate the osmotic stress response, probably by limiting ribosome access to the mRNA and consequently translation. Modulates the rates of mRNA-decapping that occur following deadenylation. Might be required for promoting the formation or the stabilization of the pre-initiation translation complexes. Required for 40S ribosomal subunit joining to capped and/or polyadenylated mRNA. With other P-body components, enhances the formation of retrotransposition-competent Ty1 virus-like particles. Structural component of the kinetochore and associates with centromeres in a NDC10-dependent manner. Involved in maintaining the structural integrity of centromeric chromatin to facilitate faithful chromosome segregation and proper kinetochore function. The protein is Deadenylation-dependent mRNA-decapping factor PAT1 (PAT1) of Saccharomyces cerevisiae (strain ATCC 204508 / S288c) (Baker's yeast).